The primary structure comprises 436 residues: Na(+)/H(+) antiporter NhaA (436 aa).

Transmembrane regions (helical) follow at residues 31-51 (VGGALLLAATIAALIWANSPG), 74-94 (LSLGAWASDGLLAIFFFIAGL), 112-132 (IVPIAAAIGGVAVPAIIYTLI), 143-163 (GWAIPTATDIAFALAVLAVIS), 173-193 (FLLTLAVVDDLIAISIIAVFY), 196-216 (NLQPQYLALALIPLGLFTWAV), 222-242 (SWYLLLPLAIITWVLVHESGV), 285-305 (VAVPIFAFFSAGVAIGGWAGF), 315-335 (IGIIAALILGKAIGIFGATFL), 350-370 (WIDVLGLAILAGIGFTVSLLI), and 384-404 (HAKVAILTASLVAALLATVIL).

The protein belongs to the NhaA Na(+)/H(+) (TC 2.A.33) antiporter family.

It is found in the cell membrane. It carries out the reaction Na(+)(in) + 2 H(+)(out) = Na(+)(out) + 2 H(+)(in). In terms of biological role, na(+)/H(+) antiporter that extrudes sodium in exchange for external protons. This is Na(+)/H(+) antiporter NhaA from Renibacterium salmoninarum (strain ATCC 33209 / DSM 20767 / JCM 11484 / NBRC 15589 / NCIMB 2235).